The following is a 113-amino-acid chain: Signal peptidase complex subunit 1 (113 aa).

The Cytoplasmic portion of the chain corresponds to 1 to 32 (MDGMIAMLPAPLQQLSSHIDFQGQKVAERTYQ). The helical transmembrane segment at 33 to 53 (VILTLAGIIGFFVGYSTQQLS) threads the bilayer. Topologically, residues 54 to 57 (YAMY) are lumenal. Residues 58–78 (TVMGAAVFTALIILPPWPFLF) traverse the membrane as a helical segment. Topologically, residues 79 to 113 (RKNPIVWQTPIEEQEASSSSDNEKKDKKKETKKTK) are cytoplasmic. The segment at 89–113 (IEEQEASSSSDNEKKDKKKETKKTK) is disordered.

The protein belongs to the SPCS1 family. Component of the signal peptidase complex (SPC) composed of a catalytic subunit sec-11 and three accessory subunits spcs-1, spcs-2 and spcs-3. The complex induces a local thinning of the ER membrane which is used to measure the length of the signal peptide (SP) h-region of protein substrates. This ensures the selectivity of the complex towards h-regions shorter than 18-20 amino acids.

It localises to the endoplasmic reticulum membrane. In terms of biological role, component of the signal peptidase complex (SPC) which catalyzes the cleavage of N-terminal signal sequences from nascent proteins as they are translocated into the lumen of the endoplasmic reticulum. Dispensable for SPC enzymatic activity. The sequence is that of Signal peptidase complex subunit 1 from Caenorhabditis briggsae.